A 204-amino-acid chain; its full sequence is High frequency lysogenization protein HflD homolog (204 aa).

The protein belongs to the HflD family.

It is found in the cytoplasm. It localises to the cell inner membrane. This is High frequency lysogenization protein HflD homolog from Ruthia magnifica subsp. Calyptogena magnifica.